The chain runs to 714 residues: Fatty acid oxidation complex subunit alpha (714 aa).

Residues 1 to 190 (MDTVSAFKLE…KAGLVDEVVP (190 aa)) are enoyl-CoA hydratase. Residues 306 to 714 (GPLTSIAVLG…TFWPADERLT (409 aa)) are 3-hydroxyacyl-CoA dehydrogenase.

It in the N-terminal section; belongs to the enoyl-CoA hydratase/isomerase family. The protein in the central section; belongs to the 3-hydroxyacyl-CoA dehydrogenase family. In terms of assembly, heterotetramer of two alpha chains (FadJ) and two beta chains (FadI).

Its subcellular location is the cytoplasm. The enzyme catalyses a (3S)-3-hydroxyacyl-CoA = a (2E)-enoyl-CoA + H2O. The catalysed reaction is a 4-saturated-(3S)-3-hydroxyacyl-CoA = a (3E)-enoyl-CoA + H2O. It carries out the reaction a (3S)-3-hydroxyacyl-CoA + NAD(+) = a 3-oxoacyl-CoA + NADH + H(+). It catalyses the reaction (3S)-3-hydroxybutanoyl-CoA = (3R)-3-hydroxybutanoyl-CoA. It participates in lipid metabolism; fatty acid beta-oxidation. Its function is as follows. Catalyzes the formation of a hydroxyacyl-CoA by addition of water on enoyl-CoA. Also exhibits 3-hydroxyacyl-CoA epimerase and 3-hydroxyacyl-CoA dehydrogenase activities. In Klebsiella pneumoniae (strain 342), this protein is Fatty acid oxidation complex subunit alpha.